The chain runs to 245 residues: MKSAAILALLAQALAVTAQPVEGDRTPGTRTLDLPNFPGGSVPTRGVEKRADLPPDNGGGNAPDPDKVHIVGVTYGGTGCPDGTVSHVLSDDRQIMTLIFDQYVAQIGPGVNTKENRKNCQLNINLRYPGGFQFSVFSADYRGYANLEKGVSGTQKSIYYFSGQTEQTSTSTTWKGPIDKDYILHDEANQTSTVWSPCGANGALNINSQVRLTATDRNARGILTNDSVDTSFKQIVHVRWQQCTN.

An N-terminal signal peptide occupies residues 1–18 (MKSAAILALLAQALAVTA). A disordered region spans residues 21–66 (VEGDRTPGTRTLDLPNFPGGSVPTRGVEKRADLPPDNGGGNAPDPD). Asn-189 and Asn-225 each carry an N-linked (GlcNAc...) asparagine glycan.

It is found in the secreted. This is an uncharacterized protein from Arthroderma benhamiae (strain ATCC MYA-4681 / CBS 112371) (Trichophyton mentagrophytes).